The primary structure comprises 345 residues: Pyruvate dehydrogenase E1 component subunit alpha (345 aa).

Heterodimer of an alpha and a beta chain. Requires thiamine diphosphate as cofactor.

It catalyses the reaction N(6)-[(R)-lipoyl]-L-lysyl-[protein] + pyruvate + H(+) = N(6)-[(R)-S(8)-acetyldihydrolipoyl]-L-lysyl-[protein] + CO2. The pyruvate dehydrogenase complex catalyzes the overall conversion of pyruvate to acetyl-CoA and CO(2). It contains multiple copies of three enzymatic components: pyruvate dehydrogenase (E1), dihydrolipoamide acetyltransferase (E2) and lipoamide dehydrogenase (E3). In Acholeplasma laidlawii, this protein is Pyruvate dehydrogenase E1 component subunit alpha (pdhA).